Consider the following 158-residue polypeptide: uncharacterized protein (158 aa).

Transmembrane regions (helical) follow at residues 10–30 and 137–157; these read LSSL…QFIV and IEVF…AYFF.

It localises to the cell membrane. This is an uncharacterized protein from Bacillus subtilis (strain 168).